The chain runs to 225 residues: UPF0758 protein Spea_3837 (225 aa).

The MPN domain maps to 102–224; sequence ILSDPDLTRD…IVSFAERGWI (123 aa). His173, His175, and Asp186 together coordinate Zn(2+). The short motif at 173-186 is the JAMM motif element; it reads HNHPSGIAEPSTAD.

Belongs to the UPF0758 family.

In Shewanella pealeana (strain ATCC 700345 / ANG-SQ1), this protein is UPF0758 protein Spea_3837.